We begin with the raw amino-acid sequence, 379 residues long: 8-amino-7-oxononanoate synthase (379 aa).

2 residues coordinate substrate: arginine 27 and arginine 34. 114 to 115 (GY) serves as a coordination point for pyridoxal 5'-phosphate. Residue histidine 139 coordinates substrate. Residues serine 187, 212–215 (DDAH), and 232–235 (TLSK) each bind pyridoxal 5'-phosphate. Position 235 is an N6-(pyridoxal phosphate)lysine (lysine 235). Substrate is bound at residue threonine 344.

It belongs to the class-II pyridoxal-phosphate-dependent aminotransferase family. BioF subfamily. As to quaternary structure, homodimer. It depends on pyridoxal 5'-phosphate as a cofactor.

It catalyses the reaction 6-carboxyhexanoyl-[ACP] + L-alanine + H(+) = (8S)-8-amino-7-oxononanoate + holo-[ACP] + CO2. The protein operates within cofactor biosynthesis; biotin biosynthesis. Functionally, catalyzes the decarboxylative condensation of pimeloyl-[acyl-carrier protein] and L-alanine to produce 8-amino-7-oxononanoate (AON), [acyl-carrier protein], and carbon dioxide. In Methylobacterium sp. (strain 4-46), this protein is 8-amino-7-oxononanoate synthase.